Reading from the N-terminus, the 706-residue chain is MRLLHPLIPASLLLTLTSATLHTSQTNTTITLTNNRLTANFSKSQGRITDLYLDNQDLLGPQSGDTGVGPYLDCYCIPSGFYTPGSTSPTLQLFTGTDKSGTSYAGVLMDETYPPTGQHFQQYWFLRDGETGLHTFSRLAYYNETTPYLRNLQEFRTLFRPNTELWTHLSSSEVQTAPLPSKKAVEEEVVVQDATWTFNNTPTDEYYVQFADYFTKYTFSNAWRDNSVHGMYADGSTSNGSTFGAWLVMNTKDTYYGGPLHSDLTVDGIVYNYLVSNHHGEGTPNITYGFDRTFGPQYYHFNGGKGSTASLQELKSDAETLADPSWNVDFYDSIAKHVVGYTPSSQRGSVQGKIKLPKGATRPIAVLTVDGQYFQDNSVNSSSYQYWAEIDDSGHFSVDHVKEGPYRLTVYADGIFGDFVRDGVQVKAGKKTTIQETWEAESAGTEIWRLGTPDKSSGEFRHGVARDPTHPLHPPEYLIYWGAYDWQSDFPDGINYTIGTSDPATDLNTVHWSVFGPTPNDPRVEYDTTHDWTINFPLSEDDLAERSKATLTIQLAGAKAASGNTDVYNASEPYTNLALESYINDQAEPLTLLIGFNQSSSCIVRSAVSCYQVRSRMEFPADWLKVGNNVLTLHLPYNATDTETAILPATVTGRLILPPQPIYGQTPVILSVIGSEKLEPLPAASILIFEIIRHQSEPLWSVPRSA.

A signal peptide spans 1–19 (MRLLHPLIPASLLLTLTSA). Asn27, Asn40, Asn143, Asn239, Asn285, Asn380, Asn495, Asn569, Asn597, and Asn638 each carry an N-linked (GlcNAc...) asparagine glycan.

The protein belongs to the polysaccharide lyase 4 family.

The protein localises to the secreted. The catalysed reaction is Endotype eliminative cleavage of L-alpha-rhamnopyranosyl-(1-&gt;4)-alpha-D-galactopyranosyluronic acid bonds of rhamnogalacturonan I domains in ramified hairy regions of pectin leaving L-rhamnopyranose at the reducing end and 4-deoxy-4,5-unsaturated D-galactopyranosyluronic acid at the non-reducing end.. Functionally, pectinolytic enzymes consist of four classes of enzymes: pectin lyase, polygalacturonase, pectin methylesterase and rhamnogalacturonase. Degrades the rhamnogalacturonan I (RG-I) backbone of pectin. The protein is Probable rhamnogalacturonate lyase B (rglB) of Aspergillus niger (strain ATCC MYA-4892 / CBS 513.88 / FGSC A1513).